A 173-amino-acid chain; its full sequence is Crossover junction endodeoxyribonuclease RuvC (173 aa).

Residues Asp-8, Glu-67, and Asp-139 contribute to the active site. Residues Asp-8, Glu-67, and Asp-139 each coordinate Mg(2+).

Belongs to the RuvC family. Homodimer which binds Holliday junction (HJ) DNA. The HJ becomes 2-fold symmetrical on binding to RuvC with unstacked arms; it has a different conformation from HJ DNA in complex with RuvA. In the full resolvosome a probable DNA-RuvA(4)-RuvB(12)-RuvC(2) complex forms which resolves the HJ. The cofactor is Mg(2+).

Its subcellular location is the cytoplasm. It catalyses the reaction Endonucleolytic cleavage at a junction such as a reciprocal single-stranded crossover between two homologous DNA duplexes (Holliday junction).. In terms of biological role, the RuvA-RuvB-RuvC complex processes Holliday junction (HJ) DNA during genetic recombination and DNA repair. Endonuclease that resolves HJ intermediates. Cleaves cruciform DNA by making single-stranded nicks across the HJ at symmetrical positions within the homologous arms, yielding a 5'-phosphate and a 3'-hydroxyl group; requires a central core of homology in the junction. The consensus cleavage sequence is 5'-(A/T)TT(C/G)-3'. Cleavage occurs on the 3'-side of the TT dinucleotide at the point of strand exchange. HJ branch migration catalyzed by RuvA-RuvB allows RuvC to scan DNA until it finds its consensus sequence, where it cleaves and resolves the cruciform DNA. The chain is Crossover junction endodeoxyribonuclease RuvC from Salmonella arizonae (strain ATCC BAA-731 / CDC346-86 / RSK2980).